Consider the following 895-residue polypeptide: MNKHHPKLRSFYSIRKSTLGVASVIVSTLFLITSQHQAQAAENTNTSDKISENQNNNATTTQPPKDTNQTQPATQPANTAKNYPAADESLKDAIKDPALENKEHDIGPREQVNFQLLDKNNETQYYHFFSIKDPADVYYTKKKAEVELDINTASTWKKFEVYENNQKLPVRLVSYSPVPEDHAYIRFPVSDGTQELKIVSSTQIDDGEETNYDYTKLVFAKPIYNDPSLVKSDTNDAVVTNDQSSSVASNQTNTNTSNQNISTINNANNQPQATTNMSQPAQPKSSTNADQASSQPAHETNSNGNTNDKTNESSNQSDVNQQYPPADESLQDAIKNPAIIDKEHTADNWRPIDFQMKNDKGERQFYHYASTVEPATVIFTKTGPIIELGLKTASTWKKFEVYEGDKKLPVELVSYDSDKDYAYIRFPVSNGTREVKIVSSIEYGENIHEDYDYTLMVFAQPITNNPDDYVDEETYNLQKLLAPYHKAKTLERQVYELEKLQEKLPEKYKAEYKKKLDQTRVELADQVKSAVTEFENVTPTNDQLTDLQEAHFVVFESEENSESVMDGFVEHPFYTATLNGQKYVVMKTKDDSYWKDLIVEGKRVTTVSKDPKNNSRTLIFPYIPDKAVYNAIVKVVVANIGYEGQYHVRIINQDINTKDDDTSQNNTSEPLNVQTGQEGKVADTDVAENSSTATNPKDASDKADVIEPESDVVKDADNNIDKDVQHDVDHLSDMSDNNHFDKYDLKEMDTQIAKDTDRNVDKDADNSVGMSSNVDTDKDSNKNKDKVIQLNHIADKNNHTGKAAKLDVVKQNYNNTDKVTDKKTTEHLPSDIHKTVDKTVKTKEKAGTPSKENKLSQSKMLPKTGETTSSQSWWGLYALLGMLALFIPKFRKESK.

The first 40 residues, 1–40, serve as a signal peptide directing secretion; sequence MNKHHPKLRSFYSIRKSTLGVASVIVSTLFLITSQHQAQA. The interval 42-85 is disordered; that stretch reads ENTNTSDKISENQNNNATTTQPPKDTNQTQPATQPANTAKNYPA. The segment covering 53 to 62 has biased composition (low complexity); it reads NQNNNATTTQ. Residues 63-81 are compositionally biased toward polar residues; it reads PPKDTNQTQPATQPANTAK. The region spanning 105–232 is the NEAT 1 domain; it reads DIGPREQVNF…IYNDPSLVKS (128 aa). Residues 241-324 form a disordered region; sequence NDQSSSVASN…NQSDVNQQYP (84 aa). Over residues 243–276 the composition is skewed to low complexity; the sequence is QSSSVASNQTNTNTSNQNISTINNANNQPQATTN. A compositionally biased stretch (polar residues) spans 277–323; it reads MSQPAQPKSSTNADQASSQPAHETNSNGNTNDKTNESSNQSDVNQQY. NEAT domains lie at 345–471 and 543–660; these read TADN…DYVD and QLTD…TKDD. Disordered regions lie at residues 657 to 720, 751 to 782, and 841 to 868; these read TKDD…DNNI, QIAK…DSNK, and KTKE…GETT. Composition is skewed to polar residues over residues 663–677 and 687–697; these read SQNN…QTGQ and AENSSTATNPK. 3 stretches are compositionally biased toward basic and acidic residues: residues 698–720, 751–765, and 841–854; these read DASD…DNNI, QIAK…KDAD, and KTKE…KENK. Polar residues predominate over residues 855-868; sequence LSQSKMLPKTGETT. Positions 861 to 865 match the LPXTG sorting signal motif; that stretch reads LPKTG. Thr864 carries the pentaglycyl murein peptidoglycan amidated threonine modification. Residues 865–895 constitute a propeptide, removed by sortase; sequence GETTSSQSWWGLYALLGMLALFIPKFRKESK.

It belongs to the IsdH family.

The protein resides in the secreted. Its subcellular location is the cell wall. Its function is as follows. Binds human plasma haptoglobin-hemoglobin complexes, haptoglobin and hemoglobin. Binds haptoglobin-hemoglobin complexes with significantly higher affinity than haptoglobin alone. The protein is Iron-regulated surface determinant protein H (isdH) of Staphylococcus aureus (strain NCTC 8325 / PS 47).